The following is a 100-amino-acid chain: NADH-quinone oxidoreductase subunit K (100 aa).

3 helical membrane-spanning segments follow: residues 4–24 (LQHGLILAAILFILGLTGLVI), 28–48 (LLFMLIGLEIMINASALAFVV), and 60–80 (VMYILAISLAAAEASIGLALL).

The protein belongs to the complex I subunit 4L family. As to quaternary structure, NDH-1 is composed of 13 different subunits. Subunits NuoA, H, J, K, L, M, N constitute the membrane sector of the complex.

The protein resides in the cell inner membrane. The enzyme catalyses a quinone + NADH + 5 H(+)(in) = a quinol + NAD(+) + 4 H(+)(out). In terms of biological role, NDH-1 shuttles electrons from NADH, via FMN and iron-sulfur (Fe-S) centers, to quinones in the respiratory chain. The immediate electron acceptor for the enzyme in this species is believed to be ubiquinone. Couples the redox reaction to proton translocation (for every two electrons transferred, four hydrogen ions are translocated across the cytoplasmic membrane), and thus conserves the redox energy in a proton gradient. The sequence is that of NADH-quinone oxidoreductase subunit K from Shigella sonnei (strain Ss046).